We begin with the raw amino-acid sequence, 123 residues long: Large ribosomal subunit protein bL12 (123 aa).

This sequence belongs to the bacterial ribosomal protein bL12 family. As to quaternary structure, homodimer. Part of the ribosomal stalk of the 50S ribosomal subunit. Forms a multimeric L10(L12)X complex, where L10 forms an elongated spine to which 2 to 4 L12 dimers bind in a sequential fashion. Binds GTP-bound translation factors.

In terms of biological role, forms part of the ribosomal stalk which helps the ribosome interact with GTP-bound translation factors. Is thus essential for accurate translation. In Chlorobium phaeovibrioides (strain DSM 265 / 1930) (Prosthecochloris vibrioformis (strain DSM 265)), this protein is Large ribosomal subunit protein bL12.